We begin with the raw amino-acid sequence, 165 residues long: 3-hydroxyacyl-[acyl-carrier-protein] dehydratase FERN, mitochondrial (165 aa).

A mitochondrion-targeting transit peptide spans 1–35 (MLMKRLFSSSHVFSSSSASSNLLKIGSVLKQARTF). Positions 36-124 (ADDDVLGYSK…AVSIRQIKNK (89 aa)) constitute a MaoC-like domain.

Homodimer.

The protein resides in the mitochondrion. It carries out the reaction a (3R)-hydroxyacyl-[ACP] = a (2E)-enoyl-[ACP] + H2O. The protein operates within lipid metabolism; fatty acid biosynthesis. Functionally, 3-hydroxyl-[acyl-carrier-protein] (3-hydroxyl-ACP) dehydratase required for mitochondrial fatty acid synthesis (mtFAS). Essential for photorespiration, tomato morphogenesis and plant development, probably by influencing mitochondrial membrane lipid composition and other lipid metabolic pathways, and by contributing to energy supply and reactive oxygen species (ROS) homeostasis. This Solanum lycopersicum (Tomato) protein is 3-hydroxyacyl-[acyl-carrier-protein] dehydratase FERN, mitochondrial.